A 277-amino-acid polypeptide reads, in one-letter code: Methylamine utilization protein MauF (277 aa).

Transmembrane regions (helical) follow at residues 33–53 (IAVL…LASA), 59–79 (LWAV…WSPC), 111–131 (YGLG…IAGF), 132–152 (SGFG…YGAH), 179–199 (WVIG…YVQT), 205–225 (MTLA…VALF), and 257–277 (ALAD…LALI).

The protein localises to the cell membrane. The protein operates within one-carbon metabolism; methylamine degradation. This chain is Methylamine utilization protein MauF (mauF), found in Paracoccus denitrificans.